We begin with the raw amino-acid sequence, 362 residues long: MKNLFLFCRSGYEKDCAAEIQQRATELNVGGFVKTNINDAYVIYQCFDDNGADTLVKELALSSLVFARQMFAAGELLSDLPEQDRVGPIVASLAALSKCGELRVETPDTNEAKELSAFCRKLTVPLRQGLKKSGALLNAESDRRPIIHVCFIGPGKAYAGYSLSHNSSPHFMGIPRLRMAADAPSRSSLKLDEAFGAFLTKEEQETRCRSGLNAVDLGACPGGWTYQLVRRGMMVAAVDNGPMDPKLMETGQVKHYRADGFRFEPPRKNVYWLVCDMVEKPARVAELMEAWAINGWFKEAIFNLKLPMKSRYKEVSVILETIGAILTENEIDFKMQCKHLYHDRDEVTVHLWIFPEKGVSYA.

S-adenosyl-L-methionine contacts are provided by residues Ser-187, 220–223, Asp-239, Asp-259, and Asp-276; that span reads CPGG. Lys-305 serves as the catalytic Proton acceptor.

It belongs to the class I-like SAM-binding methyltransferase superfamily. RNA methyltransferase RlmE family. RlmM subfamily. In terms of assembly, monomer.

Its subcellular location is the cytoplasm. It carries out the reaction cytidine(2498) in 23S rRNA + S-adenosyl-L-methionine = 2'-O-methylcytidine(2498) in 23S rRNA + S-adenosyl-L-homocysteine + H(+). Functionally, catalyzes the 2'-O-methylation at nucleotide C2498 in 23S rRNA. The chain is Ribosomal RNA large subunit methyltransferase M from Shewanella frigidimarina (strain NCIMB 400).